The chain runs to 288 residues: NAD(P)H-hydrate epimerase (288 aa).

Residues 1–47 (MSRLRALLGLGLLVAGSRVPRIKSQTIACRSGPTWWGPQRLNSGGRW) constitute a mitochondrion transit peptide. Ser-49 is modified (phosphoserine). The YjeF N-terminal domain maps to 65-275 (AQAVDQELFN…ALEKKYQLNL (211 aa)). 119 to 123 (NNGGD) serves as a coordination point for (6S)-NADPHX. A K(+)-binding site is contributed by Asn-120. An N6-succinyllysine modification is found at Lys-144. Asp-185 lines the K(+) pocket. (6S)-NADPHX is bound by residues 189–195 (GFSFKGD) and Asp-218. Residue Ser-221 participates in K(+) binding.

This sequence belongs to the NnrE/AIBP family. As to quaternary structure, homodimer. Interacts with APOA1 and APOA2. The cofactor is K(+). In terms of processing, undergoes physiological phosphorylation during sperm capacitation, downstream to PKA activation. Ubiquitously expressed, with highest levels in kidney, heart and liver. Present in cerebrospinal fluid and urine but not in serum from healthy patients. Present in serum of sepsis patients (at protein level).

It localises to the mitochondrion. Its subcellular location is the secreted. It carries out the reaction (6R)-NADHX = (6S)-NADHX. The catalysed reaction is (6R)-NADPHX = (6S)-NADPHX. Its function is as follows. Catalyzes the epimerization of the S- and R-forms of NAD(P)HX, a damaged form of NAD(P)H that is a result of enzymatic or heat-dependent hydration. This is a prerequisite for the S-specific NAD(P)H-hydrate dehydratase to allow the repair of both epimers of NAD(P)HX. Accelerates cholesterol efflux from endothelial cells to high-density lipoprotein (HDL) and thereby regulates angiogenesis. In Homo sapiens (Human), this protein is NAD(P)H-hydrate epimerase.